A 1050-amino-acid chain; its full sequence is Isoleucine--tRNA ligase (1050 aa).

The 'HIGH' region motif lies at 45–56 (PYPSSPIPHIGT). The 'KMSKS' region motif lies at 594–598 (EMHKS). Lysine 597 contributes to the ATP binding site.

It belongs to the class-I aminoacyl-tRNA synthetase family. IleS type 2 subfamily. As to quaternary structure, monomer. Zn(2+) is required as a cofactor.

It is found in the cytoplasm. It carries out the reaction tRNA(Ile) + L-isoleucine + ATP = L-isoleucyl-tRNA(Ile) + AMP + diphosphate. Its function is as follows. Catalyzes the attachment of isoleucine to tRNA(Ile). As IleRS can inadvertently accommodate and process structurally similar amino acids such as valine, to avoid such errors it has two additional distinct tRNA(Ile)-dependent editing activities. One activity is designated as 'pretransfer' editing and involves the hydrolysis of activated Val-AMP. The other activity is designated 'posttransfer' editing and involves deacylation of mischarged Val-tRNA(Ile). This Sulfolobus acidocaldarius (strain ATCC 33909 / DSM 639 / JCM 8929 / NBRC 15157 / NCIMB 11770) protein is Isoleucine--tRNA ligase.